The sequence spans 195 residues: Dephospho-CoA kinase (195 aa).

Positions 3 to 195 (KIGLTGGIGS…ANMKNVIAEI (193 aa)) constitute a DPCK domain. 11 to 16 (GSGKST) serves as a coordination point for ATP.

It belongs to the CoaE family.

The protein resides in the cytoplasm. It carries out the reaction 3'-dephospho-CoA + ATP = ADP + CoA + H(+). The protein operates within cofactor biosynthesis; coenzyme A biosynthesis; CoA from (R)-pantothenate: step 5/5. Its function is as follows. Catalyzes the phosphorylation of the 3'-hydroxyl group of dephosphocoenzyme A to form coenzyme A. The polypeptide is Dephospho-CoA kinase (Corynebacterium glutamicum (Brevibacterium saccharolyticum)).